Consider the following 1165-residue polypeptide: Sperm-associated antigen 5 (1165 aa).

A disordered region spans residues methionine 1–serine 23. Serine 12, serine 14, serine 66, serine 161, serine 321, serine 333, and serine 342 each carry phosphoserine. A disordered region spans residues threonine 431–histidine 457. Over residues serine 440–cysteine 449 the composition is skewed to polar residues. The segment at lysine 453–alanine 821 is interaction with KNSTRN. The stretch at arginine 509 to threonine 856 forms a coiled coil. The tract at residues proline 875 to glutamate 907 is disordered. The segment covering serine 876–threonine 897 has biased composition (polar residues). The stretch at aspartate 937–serine 1146 forms a coiled coil. Serine 946 is subject to Phosphoserine; by GSK3-beta.

In terms of assembly, homodimer, with a globular head domain and a long stalk. Homooligomer; the globular head domains associate, resulting in aster-like structures. Binds to microtubules in the mitotic spindle. Interacts with DCLRE1B/Apollo. Part of an astrin (SPAG5)-kinastrin (SKAP) complex containing KNSTRN, SPAG5, PLK1, DYNLL1 and SGO2A. Interacts with KNSTRN. Interacts with RPTOR; this interaction competes with RPTOR binding to MTOR, resulting in decreased mTORC1 formation. Interacts with G3BP1. The complex formed with G3BP1 and RPTOR is increased by oxidative stress. Interacts with OSBPL8, PCM1 and CDK5RAP2. Interacts (via C-terminus) with NUMA1 (via C-terminus); this interaction promotes the recruitment of SPAG5 to the microtubules at spindle poles in a dynein-dynactin-dependent manner. Interacts with DYNLL1. Phosphorylated by AURKA. Detected in testis, but not in the other tissues tested.

The protein resides in the cytoplasm. Its subcellular location is the cytoskeleton. It localises to the spindle. The protein localises to the spindle pole. It is found in the chromosome. The protein resides in the centromere. Its subcellular location is the kinetochore. It localises to the midbody. The protein localises to the microtubule organizing center. It is found in the centrosome. The protein resides in the centriolar satellite. Essential component of the mitotic spindle required for normal chromosome segregation and progression into anaphase. Required for chromosome alignment, normal timing of sister chromatid segregation, and maintenance of spindle pole architecture. In complex with SKAP, promotes stable microtubule-kinetochore attachments. May contribute to the regulation of separase activity. May regulate AURKA localization to mitotic spindle, but not to centrosomes and CCNB1 localization to both mitotic spindle and centrosomes. Involved in centriole duplication. Required for CDK5RAP22, CEP152, WDR62 and CEP63 centrosomal localization and promotes the centrosomal localization of CDK2. In non-mitotic cells, upon stress induction, inhibits mammalian target of rapamycin complex 1 (mTORC1) association and recruits the mTORC1 component RPTOR to stress granules (SGs), thereby preventing mTORC1 hyperactivation-induced apoptosis. May enhance GSK3B-mediated phosphorylation of other substrates, such as MAPT/TAU. This is Sperm-associated antigen 5 (Spag5) from Mus musculus (Mouse).